The chain runs to 175 residues: Protein LAZY 3 (175 aa).

The tract at residues 9–39 is disordered; that stretch reads RKLSGKKRVPTSDSSQEPSSPPLSKEVQGLP. An IGT motif motif is present at residues 44-50; the sequence is TFLAIGT.

It belongs to the LAZY family. Specifically expressed in roots. Expressed in root tips of young seedlings.

In terms of biological role, involved in the regulation of root gravitropism. Functions redundantly with LAZY2 and LAZY4 in the control of root gravitropism. Functions redundantly with LAZY1, LAZY2 and LAZY4 to control plant architecture by coupling gravity sensing to the formation of auxin gradients. This is Protein LAZY 3 from Arabidopsis thaliana (Mouse-ear cress).